The sequence spans 772 residues: MAPGGGGGRRDGWPARGRLLLAALLLLLWTRAASGQSSPQQSVILGMRLASCNKSCGMNPDGIIFVSEGSTVNLRLYGHRLGEISSNLISFTEVDDAETVHNSTNCLELTKDLVVQRLVNVSRGNTSGMLVVITKFLRRSENMKLYALCTRTRADGPWLKWTDKDSLLFMVEEHGRFLPLWLHILLVLVLLVLSGIFSGLNLGLMALDPMELRIVQNCGTEKERRYARKIEPIRRKGNYLLCSLLLGNVLVNTSLTILLDNLIGSGIMAVASSTIGIVIFGEILPQALCSRHGLAVGANTIVLTKIFMLLTFPLSFPISKLLDFVLGQEIRTVYNREKLMEMLKVTEPYNDLVKEELNMIQGALELRTKTVEDIMTQLHDCFMIRSDAILDFNTMSEIMESGYTRIPVFEDEQSNIVDILYVKDLAFVDPDDCTPLKTITRFYNHPVHFVFHDTKLDAMLEEFKKGKSHLAIVQKVNNEGEGDPFYEVLGLVTLEDVIEEIIKSEILDESDTYTDNRTRKRVSMKNKRDFSAFKDADNELKVKISPQLLLAAHRFLATEVPQFSPSLMSEKILLRLLKYPDVIQELRFDEHNKHCTRHYLYTRNKPADCFILILQGKVEVEAGKENMKFETGAFSYYGTMALSLAPPDRSPAHPTPLSRSASLSYPDRNTDMTPSSLAGSNQFGSCILGQYVSDFSVRALTDLQYIKVTRQQYQNGLLASRMDNSPQLTLDGCATCTENLSERPELPVVDETTTLLNERNLLLHRASQEGTI.

Topologically, residues 1–175 are extracellular; sequence MAPGGGGGRR…SLLFMVEEHG (175 aa). An N-linked (GlcNAc...) asparagine glycan is attached at Asn-120. Residues 176–196 traverse the membrane as a helical segment; it reads RFLPLWLHILLVLVLLVLSGI. In terms of domain architecture, CNNM transmembrane spans 176–356; sequence RFLPLWLHIL…EPYNDLVKEE (181 aa). Over 197–237 the chain is Cytoplasmic; that stretch reads FSGLNLGLMALDPMELRIVQNCGTEKERRYARKIEPIRRKG. Positions 238-258 form an intramembrane region, helical; it reads NYLLCSLLLGNVLVNTSLTIL. Residues 259–261 are Cytoplasmic-facing; sequence LDN. A helical membrane pass occupies residues 262–282; the sequence is LIGSGIMAVASSTIGIVIFGE. Over 283–290 the chain is Extracellular; sequence ILPQALCS. The helical transmembrane segment at 291-313 threads the bilayer; the sequence is RHGLAVGANTIVLTKIFMLLTFP. Over 314-772 the chain is Cytoplasmic; the sequence is LSFPISKLLD…LHRASQEGTI (459 aa). CBS domains follow at residues 375–436 and 443–509; these read MTQL…CTPL and YNHP…ILDE. The tract at residues 647–676 is disordered; it reads PDRSPAHPTPLSRSASLSYPDRNTDMTPSS. Phosphoserine occurs at positions 658, 662, and 767.

The protein belongs to the ACDP family. As to quaternary structure, interacts with COX11. In terms of tissue distribution, present in spinal cord dorsal horn neurons and in developing teeth (at protein level). In the tooth, higher expression is found in the ameloblasts during the transition and maturation phases of amelogenesis; reduced expression in the odontoblasts.

The protein localises to the cell membrane. Functionally, probable metal transporter. The interaction with the metal ion chaperone COX11 suggests that it may play a role in sensory neuron functions. May play a role in biomineralization and retinal function. The protein is Metal transporter CNNM4 (Cnnm4) of Rattus norvegicus (Rat).